The chain runs to 230 residues: uncharacterized protein (230 aa).

Residues 1–21 (MARYDARLRGIGKAHACSAFA) form the signal peptide. Residues 47–190 (SASVQENFIA…TVQTSSSGDP (144 aa)) form a disordered region. Residues 141–150 (PQSQTSANSQ) show a composition bias toward polar residues. A compositionally biased stretch (basic and acidic residues) spans 151-165 (KKPEIRCRERSKNAR). Positions 173–188 (AVATNEAETVQTSSSG) are enriched in polar residues.

The protein to R.meliloti RA0936 and y4aO.

This is an uncharacterized protein from Sinorhizobium fredii (strain NBRC 101917 / NGR234).